Reading from the N-terminus, the 111-residue chain is Fluoride-specific ion channel FluC (111 aa).

Transmembrane regions (helical) follow at residues 2 to 22, 36 to 56, and 71 to 91; these read GLLL…RFAL, GILL…AFLI, and FLLV…SLDI. Na(+)-binding residues include glycine 79 and threonine 82.

Belongs to the fluoride channel Fluc/FEX (TC 1.A.43) family.

It localises to the cell inner membrane. The catalysed reaction is fluoride(in) = fluoride(out). Na(+) is not transported, but it plays an essential structural role and its presence is essential for fluoride channel function. Its function is as follows. Fluoride-specific ion channel. Important for reducing fluoride concentration in the cell, thus reducing its toxicity. The sequence is that of Fluoride-specific ion channel FluC from Francisella tularensis subsp. holarctica (strain FTNF002-00 / FTA).